Reading from the N-terminus, the 57-residue chain is Large ribosomal subunit protein bL32 (57 aa).

Belongs to the bacterial ribosomal protein bL32 family.

This Bacillus pumilus (strain SAFR-032) protein is Large ribosomal subunit protein bL32.